Consider the following 614-residue polypeptide: Laccase 1 (614 aa).

An N-terminal signal peptide occupies residues 1-21; it reads MSRFARLLLMVVALFFTNAWA. 2 Plastocyanin-like domains span residues 30–143 and 172–360; these read ITWK…IRPK and YLVV…MRIP. N-linked (GlcNAc...) asparagine glycosylation is present at Asn-75. Positions 79, 81, 123, and 125 each coordinate Cu cation. Asn-257, Asn-280, Asn-445, Asn-469, and Asn-485 each carry an N-linked (GlcNAc...) asparagine glycan. In terms of domain architecture, Plastocyanin-like 3 spans 469 to 599; it reads NATRDTENDG…GGMGIAILDG (131 aa). The Cu cation site is built by His-507, His-510, and His-512. N-linked (GlcNAc...) asparagine glycosylation occurs at Asn-527. Residues His-581, Cys-582, His-583, and His-587 each coordinate Cu cation.

This sequence belongs to the multicopper oxidase family. Requires Cu cation as cofactor.

The protein resides in the cell surface. The protein operates within pigment biosynthesis. In terms of biological role, laccase; part of the Pks1 gene cluster that mediates the biosynthesis of an anthraquinone derivative pigment that contributes to conidial pigmentation that provides protection from UV radiation, heat and cold stress. The polyketide synthase Pks1 produces 1-acetyl-2,4,6,8-tetrahydroxy-9,10-anthraquinone though condensation of acetyl-CoA with malonyl-CoA. The dehydratase EthD and the laccase Mlac1 further convert the anthraquinone derivative into the final conidial pigment. The sequence is that of Laccase 1 from Metarhizium majus (strain ARSEF 297).